A 143-amino-acid chain; its full sequence is NADH-quinone oxidoreductase subunit A (143 aa).

3 helical membrane passes run 12–32 (YIVG…FLGG), 61–81 (FYLI…LYIW), and 90–110 (WIGF…LIYA).

This sequence belongs to the complex I subunit 3 family. In terms of assembly, NDH-1 is composed of 13 different subunits. Subunits NuoA, H, J, K, L, M, N constitute the membrane sector of the complex.

The protein localises to the cell inner membrane. The enzyme catalyses a quinone + NADH + 5 H(+)(in) = a quinol + NAD(+) + 4 H(+)(out). In terms of biological role, NDH-1 shuttles electrons from NADH, via FMN and iron-sulfur (Fe-S) centers, to quinones in the respiratory chain. The immediate electron acceptor for the enzyme in this species is believed to be ubiquinone. Couples the redox reaction to proton translocation (for every two electrons transferred, four hydrogen ions are translocated across the cytoplasmic membrane), and thus conserves the redox energy in a proton gradient. The polypeptide is NADH-quinone oxidoreductase subunit A (Blochmanniella floridana).